The following is a 1088-amino-acid chain: MAGALENARKEIKRLSLDDTNESQYGQIYSVSGPVVIAENMIGCAMYELVKVGHDNLVGEVIRINGDKATIQVYEETAGVTVGDPVLRTGKPLSVELGPGLMETIYDGIQRPLKAIKDESQSIYIPRGIDVPALSRTVQYDFTPGQLKVGDHITGGDIFGSIYENSLLDDHKILLPPRARGTITSIAEAGSYNVEEPVLEVEFDGKKHKYSMMHTWPVRVPRPVAEKLTADHPLLTGQRVLDSLFPCVQGGTTCIPGAFGCGKTVISQSLSKFSNSDVIIYVGCFTKGTQVMMADGADKSIESIEVGDKVMGKDGMPREVVGLPRGYDDMYKVRQLSSTRRNAKSEGLMDFTVSADHKLILKTKQDVKIATRKIGGNTYTGVTFYVLEKTKTGIELVKAKTKVFGHHIHGQNGAEEKAATFAAGIDSKEYIDWIIEARDYVQVDEIVKTSTTQMINPVHFESGKLGNWLHEHKQNKSLAPQLGYLLGTWAGIGNVKSSAFTMNSKDDVKLATRIMNYSSKLGMTCSSTESGELNVAENEEEFFNNLGAEKDEAGDFTFDEFTDAMDELTINVHGAAASKKNNLLWNALKSLGFRAKSTDIVKSIPQHIAVDDIVVRESLIAGLVDAAGNVETKSNGSIEAVVRTSFRHVARGLVKIAHSLGIESSINIKDTHIDAAGVRQEFACIVNLTGAPLAGVLSKCALARNQTPVVKFTRDPVLFNFDLIKSAKENYYGITLAEETDHQFLLSNMALVHNCGERGNEMAEVLMEFPELFTEISGRKEPIMKRTTLVANTSNMPVAAREASIYTGITLAEYFRDQGKNVSMIADSSSRWAEALREISGRLGEMPADQGFPAYLGAKLASFYERAGKATALGSPDRVGSVSIVAAVSPAGGDFSDPVTTSTLGITQVFWGLDKKLAQRKHFPSINTSVSYSKYTNVLNKYYDSNYPEFPQLRDKIREILSNAEELEQVVQLVGKSALSDSDKITLDVATLIKEDFLQQNGYSSYDAFCPIWKTFDMMRAFISYYDEAQKAIANGAQWSKLAESTSDVKHAVSSAKFFEPSRGQKEGEKEFGDLLTTISERFAEASE.

Residue 257–264 coordinates ATP; it reads GAFGCGKT. Positions 485-662 constitute a DOD-type homing endonuclease domain; that stretch reads LLGTWAGIGN…LVKIAHSLGI (178 aa).

This sequence belongs to the ATPase alpha/beta chains family. In terms of assembly, V-ATPase is a heteromultimeric enzyme composed of a peripheral catalytic V1 complex (components A to H) attached to an integral membrane V0 proton pore complex (components: a, c, c', c'', d, e, f and VOA1). Post-translationally, this protein undergoes a protein self splicing that involves a post-translational excision of the VDE intervening region (intein) followed by peptide ligation.

The protein localises to the vacuole membrane. The enzyme catalyses ATP + H2O + 4 H(+)(in) = ADP + phosphate + 5 H(+)(out). Catalytic subunit of the V1 complex of vacuolar(H+)-ATPase (V-ATPase), a multisubunit enzyme composed of a peripheral complex (V1) that hydrolyzes ATP and a membrane integral complex (V0) that translocates protons. V-ATPase is responsible for acidifying and maintaining the pH of intracellular compartments. Functionally, VDE is an endonuclease that can cleave at a site present in a VMA1 allele that lacks the derived endonuclease segment of the open reading frame; cleavage at this site only occurs during meiosis and initiates 'homing', a genetic event that converts a VMA1 allele lacking VDE into one that contains it. This Candida tropicalis (Yeast) protein is V-type proton ATPase catalytic subunit A (VMA1).